Here is a 344-residue protein sequence, read N- to C-terminus: Anthranilate phosphoribosyltransferase (344 aa).

Residues Gly84, 87 to 88 (GD), Ser92, 94 to 97 (NIST), 112 to 120 (KHGNRSASG), and Ser124 contribute to the 5-phospho-alpha-D-ribose 1-diphosphate site. Residue Gly84 coordinates anthranilate. Ser96 lines the Mg(2+) pocket. Asn115 is an anthranilate binding site. Residue Arg170 coordinates anthranilate. Asp229 and Glu230 together coordinate Mg(2+).

It belongs to the anthranilate phosphoribosyltransferase family. Homodimer. The cofactor is Mg(2+).

It catalyses the reaction N-(5-phospho-beta-D-ribosyl)anthranilate + diphosphate = 5-phospho-alpha-D-ribose 1-diphosphate + anthranilate. It functions in the pathway amino-acid biosynthesis; L-tryptophan biosynthesis; L-tryptophan from chorismate: step 2/5. Catalyzes the transfer of the phosphoribosyl group of 5-phosphorylribose-1-pyrophosphate (PRPP) to anthranilate to yield N-(5'-phosphoribosyl)-anthranilate (PRA). The protein is Anthranilate phosphoribosyltransferase of Synechococcus sp. (strain RCC307).